The following is a 273-amino-acid chain: Dermonecrotic toxin LspaSicTox-alphaIA1iii (273 aa).

H5 is an active-site residue. Mg(2+) contacts are provided by E25 and D27. H41 serves as the catalytic Nucleophile. Disulfide bonds link C45-C51 and C47-C190. A Mg(2+)-binding site is contributed by D85.

The protein belongs to the arthropod phospholipase D family. Class II subfamily. Mg(2+) is required as a cofactor. In terms of tissue distribution, expressed by the venom gland.

The protein localises to the secreted. It catalyses the reaction an N-(acyl)-sphingosylphosphocholine = an N-(acyl)-sphingosyl-1,3-cyclic phosphate + choline. It carries out the reaction an N-(acyl)-sphingosylphosphoethanolamine = an N-(acyl)-sphingosyl-1,3-cyclic phosphate + ethanolamine. The catalysed reaction is a 1-acyl-sn-glycero-3-phosphocholine = a 1-acyl-sn-glycero-2,3-cyclic phosphate + choline. The enzyme catalyses a 1-acyl-sn-glycero-3-phosphoethanolamine = a 1-acyl-sn-glycero-2,3-cyclic phosphate + ethanolamine. Dermonecrotic toxins cleave the phosphodiester linkage between the phosphate and headgroup of certain phospholipids (sphingolipid and lysolipid substrates), forming an alcohol (often choline) and a cyclic phosphate. This toxin acts on sphingomyelin (SM). It may also act on ceramide phosphoethanolamine (CPE), lysophosphatidylcholine (LPC) and lysophosphatidylethanolamine (LPE), but not on lysophosphatidylserine (LPS), and lysophosphatidylglycerol (LPG). It acts by transphosphatidylation, releasing exclusively cyclic phosphate products as second products. Induces dermonecrosis, hemolysis, increased vascular permeability, edema, inflammatory response, and platelet aggregation. This chain is Dermonecrotic toxin LspaSicTox-alphaIA1iii, found in Loxosceles spadicea (Recluse spider).